Here is a 456-residue protein sequence, read N- to C-terminus: Probable glycine dehydrogenase (decarboxylating) subunit 1 (456 aa).

The protein belongs to the GcvP family. N-terminal subunit subfamily. As to quaternary structure, the glycine cleavage system is composed of four proteins: P, T, L and H. In this organism, the P 'protein' is a heterodimer of two subunits.

It catalyses the reaction N(6)-[(R)-lipoyl]-L-lysyl-[glycine-cleavage complex H protein] + glycine + H(+) = N(6)-[(R)-S(8)-aminomethyldihydrolipoyl]-L-lysyl-[glycine-cleavage complex H protein] + CO2. Functionally, the glycine cleavage system catalyzes the degradation of glycine. The P protein binds the alpha-amino group of glycine through its pyridoxal phosphate cofactor; CO(2) is released and the remaining methylamine moiety is then transferred to the lipoamide cofactor of the H protein. The protein is Probable glycine dehydrogenase (decarboxylating) subunit 1 of Legionella pneumophila (strain Corby).